Consider the following 549-residue polypeptide: Glucose-6-phosphate isomerase (549 aa).

E353 acts as the Proton donor in catalysis. Residues H384 and K513 contribute to the active site.

Belongs to the GPI family.

Its subcellular location is the cytoplasm. It catalyses the reaction alpha-D-glucose 6-phosphate = beta-D-fructose 6-phosphate. It participates in carbohydrate biosynthesis; gluconeogenesis. Its pathway is carbohydrate degradation; glycolysis; D-glyceraldehyde 3-phosphate and glycerone phosphate from D-glucose: step 2/4. Its function is as follows. Catalyzes the reversible isomerization of glucose-6-phosphate to fructose-6-phosphate. The sequence is that of Glucose-6-phosphate isomerase from Brucella ovis (strain ATCC 25840 / 63/290 / NCTC 10512).